The sequence spans 1117 residues: Rhoptry apical surface protein 3 (1117 aa).

Polar residues predominate over residues 1 to 12 (MENRPRQQTSGH). Disordered stretches follow at residues 1–27 (MENR…SRPG), 47–243 (NHER…SHFT), 258–301 (DSER…NKGI), 325–398 (SDFK…SLST), 415–442 (WNHA…FLAA), 490–572 (AEAV…ESEL), 600–619 (RPLL…ELRS), and 654–736 (QDGT…RLQG). Composition is skewed to basic and acidic residues over residues 83-100 (DSNH…DSQK), 197-209 (TPLR…RHVS), and 275-300 (MKPK…DNKG). Low complexity-rich tracts occupy residues 418–442 (ASPG…FLAA) and 490–508 (AEAV…GDSS). The segment covering 510–520 (ESDHSGRERSR) has biased composition (basic and acidic residues). The span at 530–540 (NEITTMRSQRS) shows a compositional bias: polar residues. Residues 546–555 (FSREPERESD) show a composition bias toward basic and acidic residues. Over residues 557-569 (GEMTPTGETSGSE) the composition is skewed to polar residues. A compositionally biased stretch (basic and acidic residues) spans 724-734 (DADRKQEEKRL). The BSD domain occupies 752–788 (MLSVDRRLRKLHSDTAVRRMGETEFWKLYFYQVFLLM). Residues 829–838 (QTSGFTESDT) show a composition bias toward polar residues. Disordered regions lie at residues 829 to 848 (QTSG…YGFA), 858 to 891 (IIPP…APEQ), 909 to 964 (RSPS…GDSP), 1031 to 1066 (SSSQ…PSHL), and 1095 to 1117 (GTCG…GARA). Residues 839-848 (SSPSPSYGFA) are compositionally biased toward low complexity. Low complexity predominate over residues 909–931 (RSPSLSSSSSGTTSVSARGTGSS). Over residues 1031-1044 (SSSQVNGRVSTSRG) the composition is skewed to polar residues. Composition is skewed to basic and acidic residues over residues 1046–1062 (MGED…RLEG) and 1108–1117 (KGKEVQGARA).

Interacts with RASP2.

The protein localises to the cytoplasmic vesicle. It is found in the secretory vesicle. It localises to the rhoptry membrane. The sequence is that of Rhoptry apical surface protein 3 from Toxoplasma gondii (strain ATCC 50853 / GT1).